The following is a 443-amino-acid chain: SURP and G-patch domain-containing protein 1-like protein (443 aa).

Disordered regions lie at residues 45–71 (IISNPKPAANKISIGLKPNDAQKKGGK) and 83–141 (LAPP…TVKK). The SURP motif repeat unit spans residues 142-185 (VADKLASFVAKHGRPFEHITRQKNPGDTPFKFLFDENCADYKYY). 3 disordered regions span residues 198–221 (QTKDSGVLHSGDAGSRTSTAAIPL), 241–272 (TPVEPGASSRSAQASITRPSDSDSFSGPRGAD), and 285–325 (AQEE…HHMG). Polar residues predominate over residues 248-265 (SSRSAQASITRPSDSDSF). Over residues 285–300 (AQEEKMRRPRQSKDEM) the composition is skewed to basic and acidic residues. Residues 307–316 (QGPSETSSTD) show a composition bias toward polar residues. Positions 360-407 (ADNVGHKLLSKMGWKEGEGIGSSRKGMADPIMAGDVKTNNLGVGASAP) constitute a G-patch domain.

The protein localises to the nucleus. This is SURP and G-patch domain-containing protein 1-like protein from Arabidopsis thaliana (Mouse-ear cress).